We begin with the raw amino-acid sequence, 1071 residues long: MEPLPLENEDNQLNSNKSTTVSSKNFSNIFHNNIHNKDVVGLTDMCFLENVEENELMNNLQNRFNKDHIYTYIGEQVISVNPFSNKANIYTEQVLKSYQNMYMYEVSPHIYALAQDTYKKLLLSKESQCVIITGESGSGKTEASKIFLNYISKVCSGNLENIQGIMRLIIESNIVLESFGNAKTLRNDNSSRFGKFIEIEFDGKGSPISGKISQFLLEKSRVHSRAIGERSFHVFYQFLTDKRITSKLGLSNDPTQYKYLKDSMCFSISSINDSKDFQKVLESLKQLAWTEQEMESIWRVLGAILLIGNIEFSNDVEKSNVDAVYISTPETLKKVSQLLQCSEDSLEKSLISRSLTLGAGKRQSSIKVLLNQTQAKETRDAFSKVLYDRLFTSIIDKINSTISSKSNNGSNYIIESTIGILDIYGFEIFENNSFEQFIINYSNEKLQQLFINLVLRQEQEEYLKEGIEWKTIDNYFDNTPIIDLIEGQPVGLLKLLEEACLIGQSTPELLIQKFNQFFSKNKHFESFETSNNLSIESQSFTLKHYASPVTYNLDSFIYKNKDPLYQDLIFTMESSKDKFILSLFNKDFQKNSLGVKKIPITAATQFKNAINDLIGKLNTCQPHYIRCIKSNEDKRSNHFDYEAVRHQVRYLNMLETIRVRKAGYCHKQHYTRFLGRYKMISKETWPFWNGTPKDGVMAIVRAASAIQNSTSECQFGKKKLFIKSASTLFHFEELRQKILPSIVITIQRVWRGYKVRKWYKQELQRLREEKEEIQKQIKRKNSANLIQTYYLRYKVLTYIKKLKPWSVGPHYNKGHIMPTLWLRRTPIDSLMQSIHIIWWAKVKVTSLSMEARSLVRQKILALDLFGMGYSRKKEWDCRRKFQADYLSDDSNPKKSQFSESVQAMFQKGGDKEILFADNVIKINKRGKSQLRSLIITDQHIYKYDTKKYTQKKVGLKLHSIVALSTSNKKDTFLAIHFKQPIRDLYIDLGCDFVEKVSEVCTNLVQQVYKLTGTTIPLVFRDPLTFNNSRDSRNNGTDFVVSFSQYPKGKEQRQSTFVKGKGNTAIVYYNLD.

The 697-residue stretch at 40–736 (VGLTDMCFLE…TLFHFEELRQ (697 aa)) folds into the Myosin motor domain. Residue 134–141 (GESGSGKT) coordinates ATP. Positions 610–632 (INDLIGKLNTCQPHYIRCIKSNE) are actin-binding. The 30-residue stretch at 739-768 (LPSIVITIQRVWRGYKVRKWYKQELQRLRE) folds into the IQ domain. The TH1 domain occupies 870 to 1069 (SRKKEWDCRR…KGNTAIVYYN (200 aa)).

It belongs to the TRAFAC class myosin-kinesin ATPase superfamily. Myosin family. In terms of assembly, myosin I heavy chain is single-headed. Dimer of a heavy and a light chain. Inability to self-assemble into filaments.

Its function is as follows. Myosin is a protein that binds to actin and has ATPase activity that is activated by actin. The protein is Myosin IF heavy chain (myoF) of Dictyostelium discoideum (Social amoeba).